A 468-amino-acid chain; its full sequence is UDP-N-acetylmuramate--L-alanine ligase (468 aa).

112 to 118 (GTHGKTT) contacts ATP.

Belongs to the MurCDEF family.

Its subcellular location is the cytoplasm. The enzyme catalyses UDP-N-acetyl-alpha-D-muramate + L-alanine + ATP = UDP-N-acetyl-alpha-D-muramoyl-L-alanine + ADP + phosphate + H(+). Its pathway is cell wall biogenesis; peptidoglycan biosynthesis. Its function is as follows. Cell wall formation. The polypeptide is UDP-N-acetylmuramate--L-alanine ligase (Bordetella avium (strain 197N)).